The sequence spans 479 residues: Aspartyl/glutamyl-tRNA(Asn/Gln) amidotransferase subunit B (479 aa).

It belongs to the GatB/GatE family. GatB subfamily. As to quaternary structure, heterotrimer of A, B and C subunits.

It carries out the reaction L-glutamyl-tRNA(Gln) + L-glutamine + ATP + H2O = L-glutaminyl-tRNA(Gln) + L-glutamate + ADP + phosphate + H(+). The catalysed reaction is L-aspartyl-tRNA(Asn) + L-glutamine + ATP + H2O = L-asparaginyl-tRNA(Asn) + L-glutamate + ADP + phosphate + 2 H(+). Functionally, allows the formation of correctly charged Asn-tRNA(Asn) or Gln-tRNA(Gln) through the transamidation of misacylated Asp-tRNA(Asn) or Glu-tRNA(Gln) in organisms which lack either or both of asparaginyl-tRNA or glutaminyl-tRNA synthetases. The reaction takes place in the presence of glutamine and ATP through an activated phospho-Asp-tRNA(Asn) or phospho-Glu-tRNA(Gln). The sequence is that of Aspartyl/glutamyl-tRNA(Asn/Gln) amidotransferase subunit B from Mycoplasma mycoides subsp. mycoides SC (strain CCUG 32753 / NCTC 10114 / PG1).